The primary structure comprises 538 residues: Chaperonin GroEL (538 aa).

Residues 29–32 (TLGP), 86–90 (DGTTT), Gly-413, 477–479 (NAA), and Asp-493 each bind ATP.

The protein belongs to the chaperonin (HSP60) family. As to quaternary structure, forms a cylinder of 14 subunits composed of two heptameric rings stacked back-to-back. Interacts with the co-chaperonin GroES.

The protein localises to the cytoplasm. It catalyses the reaction ATP + H2O + a folded polypeptide = ADP + phosphate + an unfolded polypeptide.. Functionally, together with its co-chaperonin GroES, plays an essential role in assisting protein folding. The GroEL-GroES system forms a nano-cage that allows encapsulation of the non-native substrate proteins and provides a physical environment optimized to promote and accelerate protein folding. The sequence is that of Chaperonin GroEL from Scardovia inopinata (Bifidobacterium inopinatum).